Consider the following 440-residue polypeptide: Thymidine phosphorylase (440 aa).

Belongs to the thymidine/pyrimidine-nucleoside phosphorylase family. Homodimer.

The enzyme catalyses thymidine + phosphate = 2-deoxy-alpha-D-ribose 1-phosphate + thymine. It participates in pyrimidine metabolism; dTMP biosynthesis via salvage pathway; dTMP from thymine: step 1/2. Its function is as follows. The enzymes which catalyze the reversible phosphorolysis of pyrimidine nucleosides are involved in the degradation of these compounds and in their utilization as carbon and energy sources, or in the rescue of pyrimidine bases for nucleotide synthesis. The polypeptide is Thymidine phosphorylase (Enterobacter sp. (strain 638)).